The following is a 226-amino-acid chain: V-type proton ATPase subunit E 2 (226 aa).

Belongs to the V-ATPase E subunit family. As to quaternary structure, V-ATPase is a heteromultimeric enzyme made up of two complexes: the ATP-hydrolytic V1 complex and the proton translocation V0 complex. The V1 complex consists of three catalytic AB heterodimers that form a heterohexamer, three peripheral stalks each consisting of EG heterodimers, one central rotor including subunits D and F, and the regulatory subunits C and H. The proton translocation complex V0 consists of the proton transport subunit a, a ring of proteolipid subunits c9c'', rotary subunit d, subunits e and f, and the accessory subunits ATP6AP1/Ac45 and ATP6AP2/PRR. Testis specific.

Functionally, subunit of the V1 complex of vacuolar(H+)-ATPase (V-ATPase), a multisubunit enzyme composed of a peripheral complex (V1) that hydrolyzes ATP and a membrane integral complex (V0) that translocates protons. V-ATPase is responsible for acidifying and maintaining the pH of intracellular compartments and in some cell types, is targeted to the plasma membrane, where it is responsible for acidifying the extracellular environment. The polypeptide is V-type proton ATPase subunit E 2 (Atp6v1e2) (Mus musculus (Mouse)).